Here is a 151-residue protein sequence, read N- to C-terminus: Probable chemoreceptor glutamine deamidase CheD (151 aa).

It belongs to the CheD family.

It carries out the reaction L-glutaminyl-[protein] + H2O = L-glutamyl-[protein] + NH4(+). Functionally, probably deamidates glutamine residues to glutamate on methyl-accepting chemotaxis receptors (MCPs), playing an important role in chemotaxis. The sequence is that of Probable chemoreceptor glutamine deamidase CheD from Methanosarcina barkeri (strain Fusaro / DSM 804).